Consider the following 431-residue polypeptide: Adenylosuccinate synthetase (431 aa).

GTP is bound by residues 13-19 and 41-43; these read GDEGKGK and GHT. Residue D14 is the Proton acceptor of the active site. Mg(2+) contacts are provided by D14 and G41. IMP is bound by residues 14–17, 39–42, T130, R144, Q225, T240, and R304; these read DEGK and NAGH. The active-site Proton donor is the H42. 300–306 contributes to the substrate binding site; it reads ATTGRAR. Residues R306, 332–334, and 415–417 each bind GTP; these read KLD and STG.

Belongs to the adenylosuccinate synthetase family. Homodimer. The cofactor is Mg(2+).

Its subcellular location is the cytoplasm. It catalyses the reaction IMP + L-aspartate + GTP = N(6)-(1,2-dicarboxyethyl)-AMP + GDP + phosphate + 2 H(+). It functions in the pathway purine metabolism; AMP biosynthesis via de novo pathway; AMP from IMP: step 1/2. Functionally, plays an important role in the de novo pathway of purine nucleotide biosynthesis. Catalyzes the first committed step in the biosynthesis of AMP from IMP. The polypeptide is Adenylosuccinate synthetase (Ectopseudomonas mendocina (strain ymp) (Pseudomonas mendocina)).